The primary structure comprises 269 residues: MPVVSLADLLESGVHFGHQTRRWNPRMDQYIYTARNGVHIIDLVQTAQLMEDAYEYVRSSTINGKKFLFVGTKRQAAGIISQEAQRCGAHYVNQRWLGGMLTNWETIRKRVDRLKELEALEASGGIDRRGKKEGSMLRRELGKLQKYLGGIKNMRKLPDVVVIVDQRREHNAIHECQKLGIPIIAMLDTNCDPDVVDVPIPANDDAIRSIKLIVGKLADAIYEGRHGQPDVSDDYEEFDEGLDGDNLEVEAAEEVEEAAEAEVAATPEA.

The protein belongs to the universal ribosomal protein uS2 family.

This is Small ribosomal subunit protein uS2 (rpsB) from Synechocystis sp. (strain ATCC 27184 / PCC 6803 / Kazusa).